Here is a 355-residue protein sequence, read N- to C-terminus: Methionine import ATP-binding protein MetN (355 aa).

The ABC transporter domain maps to Leu-8–Ile-250. Gly-42–Ser-49 provides a ligand contact to ATP.

This sequence belongs to the ABC transporter superfamily. Methionine importer (TC 3.A.1.24) family. The complex is composed of two ATP-binding proteins (MetN), two transmembrane proteins (MetI) and a solute-binding protein (MetQ).

It localises to the cell membrane. It carries out the reaction L-methionine(out) + ATP + H2O = L-methionine(in) + ADP + phosphate + H(+). The enzyme catalyses D-methionine(out) + ATP + H2O = D-methionine(in) + ADP + phosphate + H(+). In terms of biological role, part of the ABC transporter complex MetNIQ involved in methionine import. Responsible for energy coupling to the transport system. The chain is Methionine import ATP-binding protein MetN from Streptococcus thermophilus (strain ATCC BAA-250 / LMG 18311).